The primary structure comprises 115 residues: Rubredoxin (115 aa).

The region spanning 15-66 (SPNHECRACGYVYIPSQGDQKTSVSPGTPFEALPLNWKCPVCGAPRNYFIST) is the Rubredoxin-like domain. 4 residues coordinate Fe cation: Cys-20, Cys-23, Cys-53, and Cys-56.

Belongs to the rubredoxin family. Requires Fe(3+) as cofactor.

Functionally, rubredoxin is a small nonheme, iron protein lacking acid-labile sulfide. Its single Fe, chelated to 4 Cys, functions as an electron acceptor and may also stabilize the conformation of the molecule. Could be involved in hydrogenase-linked redox processes. The protein is Rubredoxin (rub) of Synechocystis sp. (strain ATCC 27184 / PCC 6803 / Kazusa).